A 146-amino-acid polypeptide reads, in one-letter code: Gastrin-releasing peptide (146 aa).

An N-terminal signal peptide occupies residues 1 to 23 (MRGREFPLVLLALVLCQAPRGPA). M50 carries the post-translational modification Methionine amide. Positions 54–146 (STGESPYAYE…QHEGRIPQLN (93 aa)) are excised as a propeptide. A disordered region spans residues 95–146 (SHQPPQWEPLGIRQSTWDSKDGSNFKDMGPRLKVDGLSAPGSQHEGRIPQLN). Over residues 112–128 (DSKDGSNFKDMGPRLKV) the composition is skewed to basic and acidic residues.

This sequence belongs to the bombesin/neuromedin-B/ranatensin family.

The protein localises to the secreted. It is found in the cytoplasmic vesicle. Its subcellular location is the secretory vesicle lumen. The protein resides in the cell projection. It localises to the neuron projection. Stimulates the release of gastrin and other gastrointestinal hormones. Contributes to the perception of prurient stimuli and to the transmission of itch signals in the spinal cord that promote scratching behavior. Contributes primarily to nonhistaminergic itch sensation. In one study, shown to act in the amygdala as part of an inhibitory network which inhibits memory specifically related to learned fear. In another study, shown to act on vasoactive intestinal peptide (VIP)-expressing cells in the auditory cortex, most likely via extrasynaptic diffusion from local and long-range sources, to mediate disinhibition of glutamatergic cells via VIP cell-specific GRPR signaling which leads to enhanced auditory fear memories. Contributes to the regulation of food intake. Inhibits voltage-gated sodium channels but enhances voltage-gated potassium channels in hippocampal neurons. Induces sighing by acting directly on the pre-Botzinger complex, a cluster of several thousand neurons in the ventrolateral medulla responsible for inspiration during respiratory activity. In terms of biological role, induces an itch response through activation of receptors present on mast cells, triggering mast cell degranulation. The protein is Gastrin-releasing peptide (GRP) of Sus scrofa (Pig).